Reading from the N-terminus, the 110-residue chain is Large ribosomal subunit protein uL24 (110 aa).

It belongs to the universal ribosomal protein uL24 family. Part of the 50S ribosomal subunit.

One of two assembly initiator proteins, it binds directly to the 5'-end of the 23S rRNA, where it nucleates assembly of the 50S subunit. Its function is as follows. One of the proteins that surrounds the polypeptide exit tunnel on the outside of the subunit. The protein is Large ribosomal subunit protein uL24 of Frankia alni (strain DSM 45986 / CECT 9034 / ACN14a).